A 260-amino-acid polypeptide reads, in one-letter code: Proteasome subunit alpha type-1 (260 aa).

Positions 231 to 260 (FLEGLEERPQRKPALPADEPAEKAEEPMEH) are disordered. Basic and acidic residues predominate over residues 250 to 260 (PAEKAEEPMEH).

Belongs to the peptidase T1A family. As to quaternary structure, the 26S proteasome consists of a 20S proteasome core and two 19S regulatory subunits. The 20S proteasome core is a barrel-shaped complex made of 28 subunits that are arranged in four stacked rings. The two outer rings are each formed by seven alpha subunits, and the two inner rings are formed by seven beta subunits. The proteolytic activity is exerted by three beta-subunits PSMB5, PSMB6 and PSMB7.

It localises to the cytoplasm. The protein resides in the nucleus. Functionally, component of the 20S core proteasome complex involved in the proteolytic degradation of most intracellular proteins. This complex plays numerous essential roles within the cell by associating with different regulatory particles. Associated with two 19S regulatory particles, forms the 26S proteasome and thus participates in the ATP-dependent degradation of ubiquitinated proteins. The 26S proteasome plays a key role in the maintenance of protein homeostasis by removing misfolded or damaged proteins that could impair cellular functions, and by removing proteins whose functions are no longer required. Associated with the PA200 or PA28, the 20S proteasome mediates ubiquitin-independent protein degradation. This type of proteolysis is required in several pathways including spermatogenesis (20S-PA200 complex) or generation of a subset of MHC class I-presented antigenic peptides (20S-PA28 complex). The sequence is that of Proteasome subunit alpha type-1 (PSMA1) from Gallus gallus (Chicken).